Reading from the N-terminus, the 255-residue chain is Aliphatic sulfonates import ATP-binding protein SsuB (255 aa).

An ABC transporter domain is found at 12–233 (LLLNAVSKHY…RLGSVRLAEL (222 aa)). An ATP-binding site is contributed by 44–51 (GRSGGGKS).

It belongs to the ABC transporter superfamily. Aliphatic sulfonates importer (TC 3.A.1.17.2) family. As to quaternary structure, the complex is composed of two ATP-binding proteins (SsuB), two transmembrane proteins (SsuC) and a solute-binding protein (SsuA).

The protein resides in the cell inner membrane. The catalysed reaction is ATP + H2O + aliphatic sulfonate-[sulfonate-binding protein]Side 1 = ADP + phosphate + aliphatic sulfonateSide 2 + [sulfonate-binding protein]Side 1.. Its function is as follows. Part of the ABC transporter complex SsuABC involved in aliphatic sulfonates import. Responsible for energy coupling to the transport system. This is Aliphatic sulfonates import ATP-binding protein SsuB from Escherichia coli (strain K12).